The sequence spans 63 residues: Hirudin-P6 (63 aa).

The interval 1 to 3 (MRY) is interaction with thrombin active site. Intrachain disulfides connect cysteine 6–cysteine 14, cysteine 16–cysteine 28, and cysteine 22–cysteine 37. Over residues 35 to 55 (KKCVEGEGTRKPQNEGQHDFD) the composition is skewed to basic and acidic residues. The interval 35-63 (KKCVEGEGTRKPQNEGQHDFDPIPEEYLS) is disordered. Threonine 43 carries O-linked (GalNAc...) threonine glycosylation. Residues 53-63 (DFDPIPEEYLS) form an interaction with fibrinogen-binding exosite of thrombin region. Residue tyrosine 61 is modified to Sulfotyrosine.

Belongs to the protease inhibitor I14 (hirudin) family. O-linked glycan consists of Fuc-Gal-GalNAc trisaccharide.

It is found in the secreted. Its function is as follows. Hirudin is a potent thrombin-specific protease inhibitor. It forms a stable non-covalent complex with alpha-thrombin, thereby abolishing its ability to cleave fibrinogen. The chain is Hirudin-P6 from Hirudinaria manillensis (Asian medical leech).